The following is a 400-amino-acid chain: Probable glucan endo-1,6-beta-glucosidase B (400 aa).

The signal sequence occupies residues 1 to 17 (MIRRLAALSALSGLATA). Residue Asn30 is glycosylated (N-linked (GlcNAc...) asparagine). The active-site Proton donor is Glu219. The N-linked (GlcNAc...) asparagine glycan is linked to Asn272. Residue Glu320 is the Nucleophile of the active site.

It belongs to the glycosyl hydrolase 5 (cellulase A) family.

It is found in the secreted. It catalyses the reaction Random hydrolysis of (1-&gt;6)-linkages in (1-&gt;6)-beta-D-glucans.. Functionally, beta-glucanases participate in the metabolism of beta-glucan, the main structural component of the cell wall. Acts on lutean, pustulan and 1,6-oligo-beta-D-glucosides. The sequence is that of Probable glucan endo-1,6-beta-glucosidase B (exgB) from Neosartorya fischeri (strain ATCC 1020 / DSM 3700 / CBS 544.65 / FGSC A1164 / JCM 1740 / NRRL 181 / WB 181) (Aspergillus fischerianus).